A 270-amino-acid chain; its full sequence is MEGPLTIPVLDKGFVRLVDQMGDDRAIVQAARVSYGEGTKTVREDAALIDYLMRHRHTSPFEMVVFKFHVKAPIFVARQWFRHRTASVNEISGRYSILKEEFYEPEAFRKQAKRNKQASEGALLDEEALALLRKVQQEAYGAYRALLEKGVAREMARMVLPLNLYTEFYWKQDLHNLFHFLKLRLAPEAQWEIRQYARAIAEIVKERVPLAWAAFEEHLLEGAFLSRTELRALRGLLTPEVYEKALSSLGLGGSRLKEALEKVFGPGEAL.

The ThyX domain maps to 13–218; that stretch reads GFVRLVDQMG…PLAWAAFEEH (206 aa). FAD-binding positions include Ser59, 82-84, and Glu90; that span reads RHR. DUMP-binding positions include 79-82, 90-94, and Arg157; these read QWFR and EISGR. The ThyX motif motif lies at 82–92; sequence RHRTASVNEIS. FAD-binding positions include 173 to 175 and His179; that span reads DLH. Residue Arg184 coordinates dUMP. Catalysis depends on Arg184, which acts as the Involved in ionization of N3 of dUMP, leading to its activation.

The protein belongs to the thymidylate synthase ThyX family. As to quaternary structure, homotetramer. FAD serves as cofactor.

The catalysed reaction is dUMP + (6R)-5,10-methylene-5,6,7,8-tetrahydrofolate + NADPH + H(+) = dTMP + (6S)-5,6,7,8-tetrahydrofolate + NADP(+). The protein operates within pyrimidine metabolism; dTTP biosynthesis. Functionally, catalyzes the reductive methylation of 2'-deoxyuridine-5'-monophosphate (dUMP) to 2'-deoxythymidine-5'-monophosphate (dTMP) while utilizing 5,10-methylenetetrahydrofolate (mTHF) as the methyl donor, and NADPH and FADH(2) as the reductant. The sequence is that of Flavin-dependent thymidylate synthase from Thermus thermophilus (strain ATCC 27634 / DSM 579 / HB8).